Here is a 61-residue protein sequence, read N- to C-terminus: Small ribosomal subunit protein uS14 (61 aa).

Residues cysteine 24, cysteine 27, cysteine 40, and cysteine 43 each coordinate Zn(2+).

This sequence belongs to the universal ribosomal protein uS14 family. Zinc-binding uS14 subfamily. As to quaternary structure, part of the 30S ribosomal subunit. Contacts proteins S3 and S10. Zn(2+) is required as a cofactor.

Its function is as follows. Binds 16S rRNA, required for the assembly of 30S particles and may also be responsible for determining the conformation of the 16S rRNA at the A site. This chain is Small ribosomal subunit protein uS14, found in Ruminiclostridium cellulolyticum (strain ATCC 35319 / DSM 5812 / JCM 6584 / H10) (Clostridium cellulolyticum).